The chain runs to 202 residues: Na(+)-translocating NADH-quinone reductase subunit E (202 aa).

6 helical membrane-spanning segments follow: residues 5 to 25 (VSLFITSVFIENMALAYFLGM), 35 to 55 (VSTAIGLGVAVVVVMAITVPL), 81 to 101 (FLGLLSYIGLIAATVQILEMF), 114 to 134 (GVFLPLITVNCAILGGVLFMV), 144 to 164 (VVYGVGAGFGWALAITALAGI), and 180 to 200 (LGITFITVGLMSLGFMSFGGM).

This sequence belongs to the NqrDE/RnfAE family. In terms of assembly, composed of six subunits; NqrA, NqrB, NqrC, NqrD, NqrE and NqrF.

The protein resides in the cell inner membrane. The catalysed reaction is a ubiquinone + n Na(+)(in) + NADH + H(+) = a ubiquinol + n Na(+)(out) + NAD(+). Functionally, NQR complex catalyzes the reduction of ubiquinone-1 to ubiquinol by two successive reactions, coupled with the transport of Na(+) ions from the cytoplasm to the periplasm. NqrA to NqrE are probably involved in the second step, the conversion of ubisemiquinone to ubiquinol. The sequence is that of Na(+)-translocating NADH-quinone reductase subunit E from Psychrobacter arcticus (strain DSM 17307 / VKM B-2377 / 273-4).